Reading from the N-terminus, the 231-residue chain is Ribonuclease 3 (231 aa).

The 130-residue stretch at 5–134 folds into the RNase III domain; the sequence is QKKLKNDYGL…FLGALFIDQG (130 aa). Glu47 is a Mg(2+) binding site. Asp51 is an active-site residue. Mg(2+) is bound by residues Asn120 and Glu123. The active site involves Glu123. A DRBM domain is found at 160–229; that stretch reads DYKTELQEVL…AENAIKGQNH (70 aa).

It belongs to the ribonuclease III family. In terms of assembly, homodimer. The cofactor is Mg(2+).

It is found in the cytoplasm. The enzyme catalyses Endonucleolytic cleavage to 5'-phosphomonoester.. Digests double-stranded RNA. Involved in the processing of primary rRNA transcript to yield the immediate precursors to the large and small rRNAs (23S and 16S). Processes some mRNAs, and tRNAs when they are encoded in the rRNA operon. Processes pre-crRNA and tracrRNA of type II CRISPR loci if present in the organism. This is Ribonuclease 3 from Lactococcus lactis subsp. cremoris (strain MG1363).